Here is a 309-residue protein sequence, read N- to C-terminus: uncharacterized protein (309 aa).

The helical transmembrane segment at 23–43 (ALVLSSIVNILLLLLIYSTVF) threads the bilayer.

Belongs to the chlamydial CPn_0593/CT_474/TC_0759 family.

Its subcellular location is the membrane. This is an uncharacterized protein from Chlamydia trachomatis serovar D (strain ATCC VR-885 / DSM 19411 / UW-3/Cx).